The sequence spans 577 residues: Aspartate--tRNA(Asp) ligase (577 aa).

Glu172 serves as a coordination point for L-aspartate. Residues 196–199 (QLFK) form an aspartate region. Arg218 lines the L-aspartate pocket. Residues 218-220 (RDE) and Gln227 each bind ATP. His438 lines the L-aspartate pocket. An ATP-binding site is contributed by Glu473. Arg480 lines the L-aspartate pocket. Residue 525 to 528 (GFDR) participates in ATP binding.

The protein belongs to the class-II aminoacyl-tRNA synthetase family. Type 1 subfamily. In terms of assembly, homodimer.

It is found in the cytoplasm. It carries out the reaction tRNA(Asp) + L-aspartate + ATP = L-aspartyl-tRNA(Asp) + AMP + diphosphate. In terms of biological role, catalyzes the attachment of L-aspartate to tRNA(Asp) in a two-step reaction: L-aspartate is first activated by ATP to form Asp-AMP and then transferred to the acceptor end of tRNA(Asp). Is specific for tRNA(Asp) since it cannot aspartylate tRNA(Asn). The polypeptide is Aspartate--tRNA(Asp) ligase (aspS1) (Deinococcus radiodurans (strain ATCC 13939 / DSM 20539 / JCM 16871 / CCUG 27074 / LMG 4051 / NBRC 15346 / NCIMB 9279 / VKM B-1422 / R1)).